We begin with the raw amino-acid sequence, 251 residues long: NADPH-dependent oxidoreductase (251 aa).

This sequence belongs to the flavin oxidoreductase frp family. It depends on FMN as a cofactor.

Reduces FMN, organic nitro compounds and disulfide DTNB. Involved in maintenance of the cellular redox state and the disulfide stress response. The chain is NADPH-dependent oxidoreductase (nfrA) from Staphylococcus epidermidis (strain ATCC 12228 / FDA PCI 1200).